We begin with the raw amino-acid sequence, 377 residues long: Nitric oxide reductase FlRd-NAD(+) reductase (377 aa).

This sequence belongs to the FAD-dependent oxidoreductase family. FAD serves as cofactor.

It is found in the cytoplasm. The enzyme catalyses 2 reduced [nitric oxide reductase rubredoxin domain] + NAD(+) + H(+) = 2 oxidized [nitric oxide reductase rubredoxin domain] + NADH. Its pathway is nitrogen metabolism; nitric oxide reduction. Functionally, one of at least two accessory proteins for anaerobic nitric oxide (NO) reductase. Reduces the rubredoxin moiety of NO reductase. This Shigella flexneri serotype 5b (strain 8401) protein is Nitric oxide reductase FlRd-NAD(+) reductase.